The sequence spans 270 residues: uncharacterized protein (270 aa).

Composition is skewed to basic and acidic residues over residues 1-13 (MSEF…KDLY) and 49-73 (EVER…KEEK). Disordered regions lie at residues 1-76 (MSEF…KQEE), 90-111 (STSP…PQTE), and 204-270 (KKRR…FRTE). A compositionally biased stretch (polar residues) spans 90–102 (STSPAQEEQGSST). The segment covering 204 to 216 (KKRRPGQKQRAAK) has biased composition (basic residues). Basic and acidic residues predominate over residues 218–235 (LALERTKERDTKAREIKK). Residues 236-253 (QLKKKFHKRGGKKNKKKV) show a composition bias toward basic residues.

This is an uncharacterized protein from Saccharomyces cerevisiae (strain ATCC 204508 / S288c) (Baker's yeast).